A 266-amino-acid chain; its full sequence is Phosphatidylglycerol--prolipoprotein diacylglyceryl transferase (266 aa).

7 helical membrane-spanning segments follow: residues 10-30, 56-76, 92-112, 120-140, 172-192, 200-220, and 234-254; these read VAIALGPLKIHWYGLMYLVGI, LVFWVAMGVILGGRLGYVFFY, WEGGMSFHGGLIGVMLATWWF, FFELMDFIAPLVPIGLGAGRI, PSQLYQFALEGVALFTILWFY, MAVSGMFAACYGVFRFIVEFV, and WLTMGQILCLPMILGGIGLIA. Residue R139 participates in a 1,2-diacyl-sn-glycero-3-phospho-(1'-sn-glycerol) binding.

It belongs to the Lgt family.

The protein resides in the cell inner membrane. The catalysed reaction is L-cysteinyl-[prolipoprotein] + a 1,2-diacyl-sn-glycero-3-phospho-(1'-sn-glycerol) = an S-1,2-diacyl-sn-glyceryl-L-cysteinyl-[prolipoprotein] + sn-glycerol 1-phosphate + H(+). It functions in the pathway protein modification; lipoprotein biosynthesis (diacylglyceryl transfer). Functionally, catalyzes the transfer of the diacylglyceryl group from phosphatidylglycerol to the sulfhydryl group of the N-terminal cysteine of a prolipoprotein, the first step in the formation of mature lipoproteins. The sequence is that of Phosphatidylglycerol--prolipoprotein diacylglyceryl transferase from Ectopseudomonas mendocina (strain ymp) (Pseudomonas mendocina).